The primary structure comprises 303 residues: UDP-N-acetylenolpyruvoylglucosamine reductase (303 aa).

The 168-residue stretch at 29-196 folds into the FAD-binding PCMH-type domain; that stretch reads KIGGPADILI…LEAVLQLEQK (168 aa). Arg-174 is a catalytic residue. Residue Ser-225 is the Proton donor of the active site. Residue Glu-295 is part of the active site.

This sequence belongs to the MurB family. FAD is required as a cofactor.

The protein localises to the cytoplasm. It carries out the reaction UDP-N-acetyl-alpha-D-muramate + NADP(+) = UDP-N-acetyl-3-O-(1-carboxyvinyl)-alpha-D-glucosamine + NADPH + H(+). It functions in the pathway cell wall biogenesis; peptidoglycan biosynthesis. Functionally, cell wall formation. The polypeptide is UDP-N-acetylenolpyruvoylglucosamine reductase (Bacillus velezensis (strain DSM 23117 / BGSC 10A6 / LMG 26770 / FZB42) (Bacillus amyloliquefaciens subsp. plantarum)).